The following is a 404-amino-acid chain: Pyrophosphate--fructose 6-phosphate 1-phosphotransferase (404 aa).

Gly13 is a diphosphate binding site. Position 108 (Asn108) interacts with Mg(2+). Residues 136-138 (TID), 180-182 (MGR), Glu237, and 295-298 (YLQR) each bind substrate. The active-site Proton acceptor is Asp138.

The protein belongs to the phosphofructokinase type A (PFKA) family. PPi-dependent PFK group II subfamily. Clade 'B2' sub-subfamily. In terms of assembly, homodimer. The cofactor is Mg(2+).

Its subcellular location is the cytoplasm. The catalysed reaction is beta-D-fructose 6-phosphate + diphosphate = beta-D-fructose 1,6-bisphosphate + phosphate + H(+). It functions in the pathway carbohydrate degradation; glycolysis; D-glyceraldehyde 3-phosphate and glycerone phosphate from D-glucose: step 3/4. Non-allosteric. Functionally, catalyzes the phosphorylation of D-fructose 6-phosphate, the first committing step of glycolysis. Uses inorganic phosphate (PPi) as phosphoryl donor instead of ATP like common ATP-dependent phosphofructokinases (ATP-PFKs), which renders the reaction reversible, and can thus function both in glycolysis and gluconeogenesis. Consistently, PPi-PFK can replace the enzymes of both the forward (ATP-PFK) and reverse (fructose-bisphosphatase (FBPase)) reactions. This chain is Pyrophosphate--fructose 6-phosphate 1-phosphotransferase, found in Rhodospirillum rubrum (strain ATCC 11170 / ATH 1.1.1 / DSM 467 / LMG 4362 / NCIMB 8255 / S1).